We begin with the raw amino-acid sequence, 407 residues long: RING finger protein 44 (407 aa).

A disordered region spans residues 26-58 (LSSSPGQLWGRPSNLSVEEHRASAPAGRSPRML). An RING-type; atypical zinc finger spans residues 355-396 (CVVCFSDFEVRQLLRVLPCNHEFHAKCVDKWLKANRTCPICR).

This is RING finger protein 44 (Rnf44) from Mus musculus (Mouse).